A 304-amino-acid polypeptide reads, in one-letter code: Protease HtpX homolog (304 aa).

2 helical membrane-spanning segments follow: residues 14-34 and 39-59; these read VFII…IGII and YLNG…IMVM. His-144 provides a ligand contact to Zn(2+). Glu-145 is a catalytic residue. His-148 is a Zn(2+) binding site. 2 helical membrane passes run 159–179 and 202–222; these read IAIA…RLIF and IIIY…ATAI. Glu-231 lines the Zn(2+) pocket. The interval 275 to 304 is disordered; sequence SSPLKSKKDKPGLFDSHPPISSRIERLENM.

This sequence belongs to the peptidase M48B family. It depends on Zn(2+) as a cofactor.

The protein resides in the cell membrane. The polypeptide is Protease HtpX homolog (Listeria innocua serovar 6a (strain ATCC BAA-680 / CLIP 11262)).